A 616-amino-acid chain; its full sequence is Sialic acid TRAP transporter permease protein SiaT (616 aa).

Residues 1–190 (MKYINKLEEW…RISNYIKLGS (190 aa)) form a TRAP transporter small permease region. A run of 17 helical transmembrane segments spans residues 9 to 29 (EWLG…QILS), 36 to 56 (PLIW…MLGI), 83 to 103 (TNTF…HFGI), 117 to 137 (GGIS…LMMF), 153 to 173 (YLPA…LFFA), 195 to 215 (IALL…WSLF), 244 to 264 (FPLL…TGGI), 288 to 308 (IGAS…AGGL), 332 to 352 (ASCI…YGVI), 357 to 377 (IAKL…ALMA), 407 to 427 (FWAI…LFSP), 431 to 451 (AIVA…ELTL), 459 to 479 (IEAM…TFFG), 505 to 525 (VLVM…ALAL), 527 to 547 (FLVL…LIFF), 552 to 572 (TLNM…FVVA), and 587 to 607 (LPFL…PQII). The interval 191-616 (SSVYIALLVW…ITFVPNLLIP (426 aa)) is TRAP transporter large permease.

This sequence in the N-terminal section; belongs to the TRAP transporter small permease family. The protein in the C-terminal section; belongs to the TRAP transporter large permease family. As to quaternary structure, the complex comprises the extracytoplasmic solute receptor protein SiaP, and the fused transmembrane protein SiaT.

The protein resides in the cell inner membrane. Functionally, part of the tripartite ATP-independent periplasmic (TRAP) transport system SiaPT involved in the uptake of sialic acid. This chain is Sialic acid TRAP transporter permease protein SiaT (siaT), found in Haemophilus influenzae (strain 86-028NP).